Consider the following 470-residue polypeptide: Cannabinoid receptor type 1B (470 aa).

Over 1 to 113 (MKLALHRIAG…CFMILTPAQQ (113 aa)) the chain is Extracellular. Residues Asn-78 and Asn-86 are each glycosylated (N-linked (GlcNAc...) asparagine). Residues 114–139 (LVIVILAITLGTFTVLENFVVLCVIL) traverse the membrane as a helical segment. At 140-151 (HSHTLRSRPSYH) the chain is on the cytoplasmic side. Residues 152-172 (FIGSLAVADLIGSIIFVYSFL) traverse the membrane as a helical segment. Over 173-184 (DFHVLHRKDSPS) the chain is Extracellular. A helical membrane pass occupies residues 185–209 (IFLFKLAGVIASFTASVGSLFLTAI). Residues 210 to 229 (DRYVSIHRPMAYKRIITKTK) are Cytoplasmic-facing. The helical transmembrane segment at 230–252 (AVIAFSVMWAISIEFSLLPLLGW) threads the bilayer. Residues 253 to 270 (NCKRLHSVCSDIFPLIDE) lie on the Extracellular side of the membrane. The helical transmembrane segment at 271–296 (KYLMFWIGMTTVLLLFIIYAYMFILW) threads the bilayer. At 297–341 (KSHHHAVRMLSRSSQRSIIVYTSEGTKVQTVRPEQARMDLRLAKT) the chain is on the cytoplasmic side. Residues 342–362 (LVLILVALIICWGPLLAIMVY) traverse the membrane as a helical segment. The Extracellular portion of the chain corresponds to 363–374 (DLFGRVNDFIKT). Residues 375 to 396 (VFAFCSMLCLLNSTINPVIYAM) form a helical membrane-spanning segment. Topologically, residues 397 to 470 (RSKDLRRAFV…VTASSPAEAV (74 aa)) are cytoplasmic. The S-palmitoyl cysteine moiety is linked to residue Cys-412. Residues 418 to 434 (SLDSSAESDWNSRSVRS) show a composition bias toward polar residues. The interval 418–450 (SLDSSAESDWNSRSVRSTGGRAGKDRSVGGKPQ) is disordered.

Belongs to the G-protein coupled receptor 1 family. Palmitoylation at Cys-412 is important for recruitment at both plasma membrane and lipid rafts and association with G protein alpha subunits.

It is found in the cell membrane. The protein resides in the mitochondrion outer membrane. It localises to the cell projection. The protein localises to the axon. Its subcellular location is the presynapse. G-protein coupled receptor for cannabinoids. Mediates many cannabinoid-induced effects in the central nervous system (CNS), as well as in peripheral tissues. Regulates cellular respiration and energy production in response to cannabinoids. Signaling typically involves reduction in cyclic AMP. This Takifugu rubripes (Japanese pufferfish) protein is Cannabinoid receptor type 1B (cnr1b).